Reading from the N-terminus, the 337-residue chain is Holliday junction branch migration complex subunit RuvB (337 aa).

The large ATPase domain (RuvB-L) stretch occupies residues 1–180; sequence MTRLISADKS…FGVISRLEFY (180 aa). Residues L19, R20, G61, K64, T65, T66, 127–129, R170, Y180, and R217 contribute to the ATP site; that span reads EDF. T65 contacts Mg(2+). The small ATPAse domain (RuvB-S) stretch occupies residues 181–251; it reads THEELAFIIT…VADQALALLE (71 aa). Positions 254 to 337 are head domain (RuvB-H); it reads DMGFDMMDRA…APEPPQGKLF (84 aa). 2 residues coordinate DNA: R309 and R314.

This sequence belongs to the RuvB family. Homohexamer. Forms an RuvA(8)-RuvB(12)-Holliday junction (HJ) complex. HJ DNA is sandwiched between 2 RuvA tetramers; dsDNA enters through RuvA and exits via RuvB. An RuvB hexamer assembles on each DNA strand where it exits the tetramer. Each RuvB hexamer is contacted by two RuvA subunits (via domain III) on 2 adjacent RuvB subunits; this complex drives branch migration. In the full resolvosome a probable DNA-RuvA(4)-RuvB(12)-RuvC(2) complex forms which resolves the HJ.

It is found in the cytoplasm. The catalysed reaction is ATP + H2O = ADP + phosphate + H(+). Its function is as follows. The RuvA-RuvB-RuvC complex processes Holliday junction (HJ) DNA during genetic recombination and DNA repair, while the RuvA-RuvB complex plays an important role in the rescue of blocked DNA replication forks via replication fork reversal (RFR). RuvA specifically binds to HJ cruciform DNA, conferring on it an open structure. The RuvB hexamer acts as an ATP-dependent pump, pulling dsDNA into and through the RuvAB complex. RuvB forms 2 homohexamers on either side of HJ DNA bound by 1 or 2 RuvA tetramers; 4 subunits per hexamer contact DNA at a time. Coordinated motions by a converter formed by DNA-disengaged RuvB subunits stimulates ATP hydrolysis and nucleotide exchange. Immobilization of the converter enables RuvB to convert the ATP-contained energy into a lever motion, pulling 2 nucleotides of DNA out of the RuvA tetramer per ATP hydrolyzed, thus driving DNA branch migration. The RuvB motors rotate together with the DNA substrate, which together with the progressing nucleotide cycle form the mechanistic basis for DNA recombination by continuous HJ branch migration. Branch migration allows RuvC to scan DNA until it finds its consensus sequence, where it cleaves and resolves cruciform DNA. The protein is Holliday junction branch migration complex subunit RuvB of Citrifermentans bemidjiense (strain ATCC BAA-1014 / DSM 16622 / JCM 12645 / Bem) (Geobacter bemidjiensis).